A 289-amino-acid chain; its full sequence is Shikimate dehydrogenase (NADP(+)) (289 aa).

Shikimate-binding positions include 22-24 and Thr-69; that span reads SRS. The active-site Proton acceptor is Lys-73. Glu-85 contacts NADP(+). Asn-94 and Asp-109 together coordinate shikimate. Residues 134–138, 158–163, and Ile-226 contribute to the NADP(+) site; these read GAGGA and NRTLSR. Shikimate is bound at residue Tyr-228. Gly-249 lines the NADP(+) pocket.

It belongs to the shikimate dehydrogenase family. Homodimer.

It carries out the reaction shikimate + NADP(+) = 3-dehydroshikimate + NADPH + H(+). It functions in the pathway metabolic intermediate biosynthesis; chorismate biosynthesis; chorismate from D-erythrose 4-phosphate and phosphoenolpyruvate: step 4/7. In terms of biological role, involved in the biosynthesis of the chorismate, which leads to the biosynthesis of aromatic amino acids. Catalyzes the reversible NADPH linked reduction of 3-dehydroshikimate (DHSA) to yield shikimate (SA). The polypeptide is Shikimate dehydrogenase (NADP(+)) (Brucella canis (strain ATCC 23365 / NCTC 10854 / RM-666)).